A 142-amino-acid polypeptide reads, in one-letter code: MAKKVSAYIKLQVKAGSANPSPPVGPALGQHGVNIMEFCKAFNARTEKLEKGAPTPVVITVYSDRSFTFETKTPPASFLLKKAAGITSGSSKPNKDKVGKVTHAQLLEIAKTKEPDMTGSDLEAKARCIAGSARSMGLVVEG.

The protein belongs to the universal ribosomal protein uL11 family. As to quaternary structure, part of the ribosomal stalk of the 50S ribosomal subunit. Interacts with L10 and the large rRNA to form the base of the stalk. L10 forms an elongated spine to which L12 dimers bind in a sequential fashion forming a multimeric L10(L12)X complex. Post-translationally, one or more lysine residues are methylated.

Its function is as follows. Forms part of the ribosomal stalk which helps the ribosome interact with GTP-bound translation factors. This is Large ribosomal subunit protein uL11 from Tolumonas auensis (strain DSM 9187 / NBRC 110442 / TA 4).